We begin with the raw amino-acid sequence, 279 residues long: Ribosomal RNA small subunit methyltransferase A (279 aa).

His12, Leu14, Gly39, Glu60, Asp81, and Asn118 together coordinate S-adenosyl-L-methionine.

It belongs to the class I-like SAM-binding methyltransferase superfamily. rRNA adenine N(6)-methyltransferase family. RsmA subfamily.

The protein localises to the cytoplasm. The catalysed reaction is adenosine(1518)/adenosine(1519) in 16S rRNA + 4 S-adenosyl-L-methionine = N(6)-dimethyladenosine(1518)/N(6)-dimethyladenosine(1519) in 16S rRNA + 4 S-adenosyl-L-homocysteine + 4 H(+). Functionally, specifically dimethylates two adjacent adenosines (A1518 and A1519) in the loop of a conserved hairpin near the 3'-end of 16S rRNA in the 30S particle. May play a critical role in biogenesis of 30S subunits. This Polaromonas naphthalenivorans (strain CJ2) protein is Ribosomal RNA small subunit methyltransferase A.